Reading from the N-terminus, the 261-residue chain is Putative ankyrin repeat protein L99 (261 aa).

ANK repeat units lie at residues 21–50 (KVNP…DVHA), 51–80 (HEDY…NIHS), 81–110 (DRDL…NVNA), 112–140 (QNSA…NIHA), 142–170 (NNFC…DINA), 171–203 (DNGA…IDNC), and 231–259 (NELK…NINS).

The protein is Putative ankyrin repeat protein L99 of Acanthamoeba polyphaga (Amoeba).